We begin with the raw amino-acid sequence, 268 residues long: Ribosomal RNA small subunit methyltransferase A (268 aa).

Positions 18, 20, 45, 66, 91, and 112 each coordinate S-adenosyl-L-methionine.

This sequence belongs to the class I-like SAM-binding methyltransferase superfamily. rRNA adenine N(6)-methyltransferase family. RsmA subfamily.

The protein resides in the cytoplasm. The enzyme catalyses adenosine(1518)/adenosine(1519) in 16S rRNA + 4 S-adenosyl-L-methionine = N(6)-dimethyladenosine(1518)/N(6)-dimethyladenosine(1519) in 16S rRNA + 4 S-adenosyl-L-homocysteine + 4 H(+). Specifically dimethylates two adjacent adenosines (A1518 and A1519) in the loop of a conserved hairpin near the 3'-end of 16S rRNA in the 30S particle. May play a critical role in biogenesis of 30S subunits. This Shewanella baltica (strain OS185) protein is Ribosomal RNA small subunit methyltransferase A.